Reading from the N-terminus, the 595-residue chain is Wee1-like protein kinase 1-B (595 aa).

Residues 1 to 17 are compositionally biased toward polar residues; sequence MNVQPRNMNVQPRNMNV. The tract at residues 1–127 is disordered; that stretch reads MNVQPRNMNV…CPGTPPHKTF (127 aa). The span at 111–122 shows a compositional bias: pro residues; it reads PTSPIPECPGTP. Threonine 186 carries the phosphothreonine; by cdk1 modification. Residues 248 to 518 form the Protein kinase domain; that stretch reads FHELEKIGSG…SVALVKHSVL (271 aa). ATP contacts are provided by residues 254 to 262 and lysine 277; that span reads IGSGEFGSV. The Proton acceptor role is filled by aspartate 375. 2 residues coordinate Mg(2+): asparagine 380 and aspartate 412. The stretch at 526–563 forms a coiled coil; that stretch reads AEQLRIELDAEKFKNALLQKELKKAQIAKAAAEERAHF.

Belongs to the protein kinase superfamily. Ser/Thr protein kinase family. WEE1 subfamily. In terms of assembly, interacts (when phosphorylated at Thr-186) with pin1. Phosphorylation at Thr-186 during M-phase by cdk1 inhibits the kinase activity and leads to interaction with pin1. As to expression, zygotically expressed. Present in oocytes and postgastrula embryos (at least until the tailbud stage). Expression begins at the midblastula stage and increases after the early gastrula stage.

It localises to the nucleus. It carries out the reaction L-tyrosyl-[protein] + ATP = O-phospho-L-tyrosyl-[protein] + ADP + H(+). Acts as a zygotic negative regulator of entry into mitosis (G2 to M transition) by protecting the nucleus from cytoplasmically activated cyclin B1-complexed cdk1 before the onset of mitosis by mediating phosphorylation of cdk1 on 'Tyr-15'. Specifically phosphorylates and inactivates cyclin B1-complexed cdk1 reaching a maximum during G2 phase and a minimum as cells enter M phase. Phosphorylation of cyclin B1-cdk1 occurs exclusively on 'Tyr-15' and phosphorylation of monomeric cdk1 does not occur. This chain is Wee1-like protein kinase 1-B (wee1-b), found in Xenopus laevis (African clawed frog).